A 304-amino-acid chain; its full sequence is UDP-3-O-acyl-N-acetylglucosamine deacetylase (304 aa).

Residues His-78, His-237, and Asp-241 each contribute to the Zn(2+) site. His-264 acts as the Proton donor in catalysis.

This sequence belongs to the LpxC family. Zn(2+) serves as cofactor.

It catalyses the reaction a UDP-3-O-[(3R)-3-hydroxyacyl]-N-acetyl-alpha-D-glucosamine + H2O = a UDP-3-O-[(3R)-3-hydroxyacyl]-alpha-D-glucosamine + acetate. It participates in glycolipid biosynthesis; lipid IV(A) biosynthesis; lipid IV(A) from (3R)-3-hydroxytetradecanoyl-[acyl-carrier-protein] and UDP-N-acetyl-alpha-D-glucosamine: step 2/6. In terms of biological role, catalyzes the hydrolysis of UDP-3-O-myristoyl-N-acetylglucosamine to form UDP-3-O-myristoylglucosamine and acetate, the committed step in lipid A biosynthesis. In Xylella fastidiosa (strain Temecula1 / ATCC 700964), this protein is UDP-3-O-acyl-N-acetylglucosamine deacetylase.